Here is a 215-residue protein sequence, read N- to C-terminus: 3-demethoxyubiquinol 3-hydroxylase (215 aa).

Fe cation-binding residues include Glu64, Glu94, His97, Glu146, Glu178, and His181.

Belongs to the COQ7 family. The cofactor is Fe cation.

It localises to the cell membrane. It catalyses the reaction a 5-methoxy-2-methyl-3-(all-trans-polyprenyl)benzene-1,4-diol + AH2 + O2 = a 3-demethylubiquinol + A + H2O. The protein operates within cofactor biosynthesis; ubiquinone biosynthesis. Catalyzes the hydroxylation of 2-nonaprenyl-3-methyl-6-methoxy-1,4-benzoquinol during ubiquinone biosynthesis. The chain is 3-demethoxyubiquinol 3-hydroxylase from Ectopseudomonas mendocina (strain ymp) (Pseudomonas mendocina).